Here is a 295-residue protein sequence, read N- to C-terminus: 4-diphosphocytidyl-2-C-methyl-D-erythritol kinase (295 aa).

Lys-18 is an active-site residue. 101–111 (PMGGGIGGGSS) lines the ATP pocket. The active site involves Asp-143.

Belongs to the GHMP kinase family. IspE subfamily.

The enzyme catalyses 4-CDP-2-C-methyl-D-erythritol + ATP = 4-CDP-2-C-methyl-D-erythritol 2-phosphate + ADP + H(+). It participates in isoprenoid biosynthesis; isopentenyl diphosphate biosynthesis via DXP pathway; isopentenyl diphosphate from 1-deoxy-D-xylulose 5-phosphate: step 3/6. Catalyzes the phosphorylation of the position 2 hydroxy group of 4-diphosphocytidyl-2C-methyl-D-erythritol. In Vibrio cholerae serotype O1 (strain ATCC 39315 / El Tor Inaba N16961), this protein is 4-diphosphocytidyl-2-C-methyl-D-erythritol kinase.